Here is a 239-residue protein sequence, read N- to C-terminus: 6-phosphogluconolactonase (239 aa).

This sequence belongs to the glucosamine/galactosamine-6-phosphate isomerase family. 6-phosphogluconolactonase subfamily.

The enzyme catalyses 6-phospho-D-glucono-1,5-lactone + H2O = 6-phospho-D-gluconate + H(+). Its pathway is carbohydrate degradation; pentose phosphate pathway; D-ribulose 5-phosphate from D-glucose 6-phosphate (oxidative stage): step 2/3. Hydrolysis of 6-phosphogluconolactone to 6-phosphogluconate. The protein is 6-phosphogluconolactonase (pgl) of Xylella fastidiosa (strain Temecula1 / ATCC 700964).